The following is a 396-amino-acid chain: Putative transposase y4rJ (396 aa).

Belongs to the transposase 20 family.

This chain is Putative transposase y4rJ, found in Sinorhizobium fredii (strain NBRC 101917 / NGR234).